Consider the following 542-residue polypeptide: Putative inactive cadmium/zinc-transporting ATPase HMA3 (542 aa).

The Cytoplasmic segment spans residues 1–89; the sequence is MAEGEESKKM…VRPYGETSLK (89 aa). The region spanning 13-79 is the HMA domain; it reads QTSYFDVVGI…ALNQARLEAS (67 aa). A helical membrane pass occupies residues 90 to 111; that stretch reads SQWPSPFAIVSGVLLVLSFFKY. Residues 112 to 114 lie on the Extracellular side of the membrane; the sequence is FYS. The chain crosses the membrane as a helical span at residues 115–134; sequence PLEWLAIVAVVAGVFPILAK. Topologically, residues 135-141 are cytoplasmic; it reads AVASVTR. A helical transmembrane segment spans residues 142-162; that stretch reads FRLDINALTLIAVIATLCMQD. Position 163 (Phe-163) is a topological domain, extracellular. A helical membrane pass occupies residues 164–184; the sequence is TEAATIVFLFSVADWLESSAA. At 185-310 the chain is on the cytoplasmic side; that stretch reads HKASIVMSSL…QTKTQRFIDK (126 aa). A helical transmembrane segment spans residues 311–333; it reads CSRYYTPAVVVSAACFAVIPVLL. Over 334 to 341 the chain is Extracellular; sequence KVQDLSHW. The chain crosses the membrane as a helical span at residues 342 to 359; that stretch reads FHLALVVLVSGCPCGLIL. Over 360–542 the chain is Cytoplasmic; that stretch reads STPVATFCAL…VAQALKELKS (183 aa).

Belongs to the cation transport ATPase (P-type) (TC 3.A.3) family. Type IB subfamily.

Its subcellular location is the membrane. The polypeptide is Putative inactive cadmium/zinc-transporting ATPase HMA3 (HMA3) (Arabidopsis thaliana (Mouse-ear cress)).